Reading from the N-terminus, the 126-residue chain is Transcription antitermination protein NusB (126 aa).

It belongs to the NusB family.

Functionally, involved in transcription antitermination. Required for transcription of ribosomal RNA (rRNA) genes. Binds specifically to the boxA antiterminator sequence of the ribosomal RNA (rrn) operons. The chain is Transcription antitermination protein NusB from Oceanobacillus iheyensis (strain DSM 14371 / CIP 107618 / JCM 11309 / KCTC 3954 / HTE831).